Here is an 845-residue protein sequence, read N- to C-terminus: Translation initiation factor IF-2 (845 aa).

Disordered regions lie at residues 45 to 91 (RRKI…SNLS) and 127 to 209 (EESL…TPKV). The segment covering 81–91 (SESSMAKSNLS) has biased composition (polar residues). Residues 137 to 149 (TEIHQEEQKEEKN) show a composition bias toward basic and acidic residues. The span at 151–162 (PVQTSPLSSAHS) shows a compositional bias: polar residues. Residues 179 to 193 (TEKRKADEIKNDDRH) show a composition bias toward basic and acidic residues. Residues 343–512 (PRPPVVTIMG…LLQAELLDLK (170 aa)) form the tr-type G domain. A G1 region spans residues 352 to 359 (GHVDHGKT). 352–359 (GHVDHGKT) contributes to the GTP binding site. The segment at 377–381 (GITQH) is G2. The G3 stretch occupies residues 398 to 401 (DTPG). Residues 398 to 402 (DTPGH) and 452 to 455 (NKID) contribute to the GTP site. The interval 452–455 (NKID) is G4. A G5 region spans residues 488-490 (SAK).

This sequence belongs to the TRAFAC class translation factor GTPase superfamily. Classic translation factor GTPase family. IF-2 subfamily.

The protein localises to the cytoplasm. Functionally, one of the essential components for the initiation of protein synthesis. Protects formylmethionyl-tRNA from spontaneous hydrolysis and promotes its binding to the 30S ribosomal subunits. Also involved in the hydrolysis of GTP during the formation of the 70S ribosomal complex. The chain is Translation initiation factor IF-2 from Bartonella quintana (strain Toulouse) (Rochalimaea quintana).